The chain runs to 760 residues: Catalase-peroxidase (760 aa).

A disordered region spans residues 1–22 (MSQGECPVKKVPNVAGSGTRNT). The tryptophyl-tyrosyl-methioninium (Trp-Tyr) (with M-268) cross-link spans 93-242 (WHSAGTYRVT…LAAAHMGLIY (150 aa)). The active-site Proton acceptor is the His-94. Residues 206-226 (KGEGIMDGDQHKTDKSEPHTS) are disordered. Over residues 213 to 226 (GDQHKTDKSEPHTS) the composition is skewed to basic and acidic residues. Residues 242-268 (YVNPEGPEGIPDPVAAAHDIRTTFGRM) constitute a cross-link (tryptophyl-tyrosyl-methioninium (Tyr-Met) (with W-93)). Heme b is bound at residue His-283.

Belongs to the peroxidase family. Peroxidase/catalase subfamily. As to quaternary structure, homodimer or homotetramer. Heme b serves as cofactor. In terms of processing, formation of the three residue Trp-Tyr-Met cross-link is important for the catalase, but not the peroxidase activity of the enzyme.

The protein localises to the cytoplasm. It catalyses the reaction H2O2 + AH2 = A + 2 H2O. It carries out the reaction 2 H2O2 = O2 + 2 H2O. Bifunctional enzyme with both catalase and broad-spectrum peroxidase activity. This Pyrenophora tritici-repentis (strain Pt-1C-BFP) (Wheat tan spot fungus) protein is Catalase-peroxidase.